A 284-amino-acid chain; its full sequence is MQEKIRETCLATKTVKLLSARRLIVKIGSAVVADAETGEIRGPWLETLIKDVVRFFARGQQVIIVTSGAVAAGSRHFKQLDRSLRIEEKQAAAAIGQIRLMIAYEQSLKRHGFGLGQVLLTSADVDNQRCRLNARSAFQQLLNVGAVPVINENDATATPEVCLGDNDRLAARVAQIAKADLLILLSDVDGLFTEDPHDNPLARMIPEVRRITPEIEIMASLSPARHGSGGMVTKLMAARIAMEAGCNVVIAKGSKSYPLAAIENGAPSTWFIPPARETATRGGR.

Lys26 provides a ligand contact to ATP. Residues Ser67, Asp154, and Asn166 each coordinate substrate. Residues 186 to 187 (SD) and 228 to 234 (SGGMVTK) each bind ATP.

Belongs to the glutamate 5-kinase family.

The protein localises to the cytoplasm. It catalyses the reaction L-glutamate + ATP = L-glutamyl 5-phosphate + ADP. It functions in the pathway amino-acid biosynthesis; L-proline biosynthesis; L-glutamate 5-semialdehyde from L-glutamate: step 1/2. Catalyzes the transfer of a phosphate group to glutamate to form L-glutamate 5-phosphate. The protein is Glutamate 5-kinase 2 of Mesorhizobium japonicum (strain LMG 29417 / CECT 9101 / MAFF 303099) (Mesorhizobium loti (strain MAFF 303099)).